The chain runs to 230 residues: Ubiquitin carboxyl-terminal hydrolase isozyme L3 (230 aa).

Residues 5–229 (RWLPLEANPE…LRFNAIALSA (225 aa)) form the UCH catalytic domain. The interval 8 to 13 (PLEANP) is interaction with ubiquitin. Catalysis depends on C95, which acts as the Nucleophile. S130 is modified (phosphoserine). The tract at residues 152–159 (AHEGQTEA) is interaction with ubiquitin. Crossover loop which restricts access of large ubiquitin adducts to the active site. H169 serves as the catalytic Proton donor. The interval 219-224 (ELRFNA) is interaction with ubiquitin.

Belongs to the peptidase C12 family. Preferentially binds diubiquitin; the interaction does not hydrolyze diubiquitin but, in vitro, inhibits the hydrolyzing activity on other substrates. Ubiquitously expressed, with highest levels in brain, liver, heart, thymus, kidney and testis. Highly expressed in the cauda epididymidis, in meiotic pachytene spermatocytes and post-meiotic spematids. In the retina, enriched in the photoreceptor inner segment.

It localises to the cytoplasm. The catalysed reaction is Thiol-dependent hydrolysis of ester, thioester, amide, peptide and isopeptide bonds formed by the C-terminal Gly of ubiquitin (a 76-residue protein attached to proteins as an intracellular targeting signal).. Inhibited by monoubiquitin and diubiquitin. In terms of biological role, deubiquitinating enzyme (DUB) that controls levels of cellular ubiquitin through processing of ubiquitin precursors and ubiquitinated proteins. Thiol protease that recognizes and hydrolyzes a peptide bond at the C-terminal glycine of either ubiquitin or NEDD8. Has a 10-fold preference for Arg and Lys at position P3'', and exhibits a preference towards 'Lys-48'-linked ubiquitin chains. Deubiquitinates ENAC in apical compartments, thereby regulating apical membrane recycling. Indirectly increases the phosphorylation of IGFIR, AKT and FOXO1 and promotes insulin-signaling and insulin-induced adipogenesis. Required for stress-response retinal, skeletal muscle and germ cell maintenance. May be involved in working memory. Can hydrolyze UBB(+1), a mutated form of ubiquitin which is not effectively degraded by the proteasome. This Mus musculus (Mouse) protein is Ubiquitin carboxyl-terminal hydrolase isozyme L3 (Uchl3).